Consider the following 68-residue polypeptide: U1-agatoxin-Ta1c (68 aa).

Positions 1-17 (MKLQLMICLVLLPCFFC) are cleaved as a signal peptide. Intrachain disulfides connect Cys-23–Cys-53, Cys-39–Cys-49, and Cys-42–Cys-62. Position 67 is a lysine amide (Lys-67).

Belongs to the helical arthropod-neuropeptide-derived (HAND) family. Expressed by the venom gland.

Its subcellular location is the secreted. Its function is as follows. Toxin that paralyzes insects. May have a direct effect on the insect central nervous system. The protein is U1-agatoxin-Ta1c of Eratigena agrestis (Hobo spider).